We begin with the raw amino-acid sequence, 567 residues long: Arginine--tRNA ligase (567 aa).

The 'HIGH' region motif lies at 121–131 (ANPNGPLHVGH).

It belongs to the class-I aminoacyl-tRNA synthetase family.

It localises to the cytoplasm. The enzyme catalyses tRNA(Arg) + L-arginine + ATP = L-arginyl-tRNA(Arg) + AMP + diphosphate. This is Arginine--tRNA ligase from Methanosarcina acetivorans (strain ATCC 35395 / DSM 2834 / JCM 12185 / C2A).